Reading from the N-terminus, the 365-residue chain is Outer membrane protein assembly factor BamC (365 aa).

The N-terminal stretch at 1–19 (MKHNRLAIAALAPVLILVG) is a signal peptide. A lipid anchor (N-palmitoyl cysteine) is attached at cysteine 20. Cysteine 20 carries S-diacylglycerol cysteine lipidation.

It belongs to the BamC family. In terms of assembly, part of the Bam complex.

The protein resides in the cell outer membrane. In terms of biological role, part of the outer membrane protein assembly complex, which is involved in assembly and insertion of beta-barrel proteins into the outer membrane. This chain is Outer membrane protein assembly factor BamC, found in Ferrimonas balearica (strain DSM 9799 / CCM 4581 / KCTC 23876 / PAT).